Reading from the N-terminus, the 962-residue chain is Oncostatin-M-specific receptor subunit beta (962 aa).

An N-terminal signal peptide occupies residues 1–28 (MAFSVVLHQVTFLLAVLSLRTSQSKVLG). Over 29–738 (EPLQLTPEIH…VTTPDVRSHM (710 aa)) the chain is Extracellular. Asparagine 219 carries an N-linked (GlcNAc...) asparagine glycan. 5 Fibronectin type-III domains span residues 237 to 332 (EPKN…VHPK), 333 to 426 (APHD…TPEA), 428 to 527 (PSEA…SGHE), 528 to 621 (EVHE…TQEL), and 623 to 734 (PSVN…TPDV). A disulfide bond links cysteine 243 and cysteine 253. N-linked (GlcNAc...) asparagine glycosylation occurs at asparagine 324. A WSXWS motif motif is present at residues 413 to 417 (WSDWM). N-linked (GlcNAc...) asparagine glycans are attached at residues asparagine 492, asparagine 578, and asparagine 723. The helical transmembrane segment at 739–759 (LLQIILPMTLGVFLSIIVCYW) threads the bilayer. Over 760 to 962 (KSQWVKEKCY…ASLKENNLTS (203 aa)) the chain is Cytoplasmic. Residues 768–776 (CYPDIPNPY) carry the Box 1 motif motif. Positions 818-840 (VGSGKLHTEDVPTKPPLVPTEKD) are disordered.

It belongs to the type I cytokine receptor family. Type 2 subfamily. Heterodimer composed of OSMR and IL6ST (type II OSM receptor). Heterodimer with IL31RA to form the IL31 receptor. In terms of tissue distribution, widely expressed. Expressed at high levels in the liver, skin and spleen. In the liver it is expressed exclusively in the oval cells.

The protein resides in the membrane. Functionally, associates with IL31RA to form the IL31 receptor. Binds IL31 and activates STAT1, STAT3 and STAT5. Capable of transducing OSM-specific signaling events. The OSM/OSM-R system is pivotal in the differentiation of oval cells into hepatocytes, thereby promoting liver regeneration. This is Oncostatin-M-specific receptor subunit beta (Osmr) from Rattus norvegicus (Rat).